The primary structure comprises 453 residues: C4-dicarboxylate TRAP transporter large permease protein DctM (453 aa).

A run of 13 helical transmembrane segments spans residues 2 to 22 (AVALLFILVIGMMIVGVPIAI), 50 to 70 (AFAGHYTLLAIPFFILASTFM), 82 to 102 (FAIAMVGWFRGGLAIASVVAC), 104 to 124 (MFAALSGSSPATVVAIGSIVI), 139 to 159 (GVICNAGTLGILIPPSIVMVV), 172 to 192 (FLGGVVPGLLAGLMLIIAIYI), 217 to 237 (ASWGLLLVVIILGGIYGGIFT), 243 to 263 (AVAAVYSFFIANFIYRDMGPF), 289 to 309 (LYDAGKLTIMLMFIIANALIL), 326 to 346 (MLSAGLGPITFLIVVNLILLV), 356 to 376 (LLVIVAPLVFPIAIALGIDPI), 380 to 400 (IMMVVNMEIGMITPPVGLNLF), and 417 to 437 (ALPWVGVMFLFLIIVTYVPWV).

The protein belongs to the TRAP transporter large permease family. The complex comprises the extracytoplasmic solute receptor protein DctP, and the two transmembrane proteins DctQ and DctM.

The protein resides in the cell inner membrane. Its function is as follows. Part of the tripartite ATP-independent periplasmic (TRAP) transport system DctPQM involved in C4-dicarboxylates uptake. The chain is C4-dicarboxylate TRAP transporter large permease protein DctM from Vibrio cholerae serotype O1 (strain ATCC 39315 / El Tor Inaba N16961).